Here is a 349-residue protein sequence, read N- to C-terminus: Anthranilate phosphoribosyltransferase (349 aa).

5-phospho-alpha-D-ribose 1-diphosphate is bound by residues G87, 90–91 (GD), T95, 97–100 (NIST), 115–123 (KHGNRSVSS), and S127. G87 is a binding site for anthranilate. Residue S99 coordinates Mg(2+). Position 118 (N118) interacts with anthranilate. Position 173 (R173) interacts with anthranilate. Mg(2+) is bound by residues D231 and E232.

This sequence belongs to the anthranilate phosphoribosyltransferase family. Homodimer. The cofactor is Mg(2+).

The enzyme catalyses N-(5-phospho-beta-D-ribosyl)anthranilate + diphosphate = 5-phospho-alpha-D-ribose 1-diphosphate + anthranilate. The protein operates within amino-acid biosynthesis; L-tryptophan biosynthesis; L-tryptophan from chorismate: step 2/5. In terms of biological role, catalyzes the transfer of the phosphoribosyl group of 5-phosphorylribose-1-pyrophosphate (PRPP) to anthranilate to yield N-(5'-phosphoribosyl)-anthranilate (PRA). The protein is Anthranilate phosphoribosyltransferase of Shewanella loihica (strain ATCC BAA-1088 / PV-4).